The following is a 156-amino-acid chain: Ribosome maturation factor RimP (156 aa).

The protein belongs to the RimP family.

The protein resides in the cytoplasm. Required for maturation of 30S ribosomal subunits. The chain is Ribosome maturation factor RimP from Bacillus cereus (strain G9842).